The sequence spans 429 residues: UDP-N-acetylglucosamine 1-carboxyvinyltransferase (429 aa).

22 to 23 serves as a coordination point for phosphoenolpyruvate; that stretch reads KN. UDP-N-acetyl-alpha-D-glucosamine is bound at residue R102. The Proton donor role is filled by C126. At C126 the chain carries 2-(S-cysteinyl)pyruvic acid O-phosphothioketal. Residues 131 to 135, 171 to 174, D316, and I338 contribute to the UDP-N-acetyl-alpha-D-glucosamine site; these read RPVDL and KVSV.

It belongs to the EPSP synthase family. MurA subfamily.

The protein localises to the cytoplasm. The catalysed reaction is phosphoenolpyruvate + UDP-N-acetyl-alpha-D-glucosamine = UDP-N-acetyl-3-O-(1-carboxyvinyl)-alpha-D-glucosamine + phosphate. It participates in cell wall biogenesis; peptidoglycan biosynthesis. In terms of biological role, cell wall formation. Adds enolpyruvyl to UDP-N-acetylglucosamine. The sequence is that of UDP-N-acetylglucosamine 1-carboxyvinyltransferase from Chelativorans sp. (strain BNC1).